Reading from the N-terminus, the 246-residue chain is 4-hydroxy-tetrahydrodipicolinate reductase (246 aa).

Residues glycine 8–methionine 13, aspartate 34, glycine 74–threonine 76, and alanine 101–phenylalanine 104 each bind NAD(+). The active-site Proton donor/acceptor is the histidine 131. Histidine 132 serves as a coordination point for (S)-2,3,4,5-tetrahydrodipicolinate. Lysine 135 acts as the Proton donor in catalysis. A (S)-2,3,4,5-tetrahydrodipicolinate-binding site is contributed by glycine 141–threonine 142.

This sequence belongs to the DapB family.

Its subcellular location is the cytoplasm. The enzyme catalyses (S)-2,3,4,5-tetrahydrodipicolinate + NAD(+) + H2O = (2S,4S)-4-hydroxy-2,3,4,5-tetrahydrodipicolinate + NADH + H(+). It carries out the reaction (S)-2,3,4,5-tetrahydrodipicolinate + NADP(+) + H2O = (2S,4S)-4-hydroxy-2,3,4,5-tetrahydrodipicolinate + NADPH + H(+). Its pathway is amino-acid biosynthesis; L-lysine biosynthesis via DAP pathway; (S)-tetrahydrodipicolinate from L-aspartate: step 4/4. Functionally, catalyzes the conversion of 4-hydroxy-tetrahydrodipicolinate (HTPA) to tetrahydrodipicolinate. The sequence is that of 4-hydroxy-tetrahydrodipicolinate reductase from Thermobifida fusca (strain YX).